Here is a 290-residue protein sequence, read N- to C-terminus: NAD kinase (290 aa).

Asp72 serves as the catalytic Proton acceptor. NAD(+)-binding positions include 72 to 73, 146 to 147, Arg174, Asp176, and 187 to 192; these read DG, NE, and TAYALS.

The protein belongs to the NAD kinase family. Requires a divalent metal cation as cofactor.

It is found in the cytoplasm. It carries out the reaction NAD(+) + ATP = ADP + NADP(+) + H(+). Functionally, involved in the regulation of the intracellular balance of NAD and NADP, and is a key enzyme in the biosynthesis of NADP. Catalyzes specifically the phosphorylation on 2'-hydroxyl of the adenosine moiety of NAD to yield NADP. This chain is NAD kinase, found in Methylococcus capsulatus (strain ATCC 33009 / NCIMB 11132 / Bath).